A 156-amino-acid chain; its full sequence is Ribosomal RNA large subunit methyltransferase H (156 aa).

S-adenosyl-L-methionine-binding positions include leucine 72, glycine 104, and 123–128 (FGKMVW).

It belongs to the RNA methyltransferase RlmH family. Homodimer.

It localises to the cytoplasm. The enzyme catalyses pseudouridine(1915) in 23S rRNA + S-adenosyl-L-methionine = N(3)-methylpseudouridine(1915) in 23S rRNA + S-adenosyl-L-homocysteine + H(+). In terms of biological role, specifically methylates the pseudouridine at position 1915 (m3Psi1915) in 23S rRNA. The chain is Ribosomal RNA large subunit methyltransferase H from Ruegeria sp. (strain TM1040) (Silicibacter sp.).